The sequence spans 295 residues: GDP-polyphosphate phosphotransferase (295 aa).

The interval 1–28 is disordered; the sequence is MDIPSVDVSTATNDGASSRAKGHRSAAP. Residues 7–16 are compositionally biased toward polar residues; that stretch reads DVSTATNDGA. A phosphohistidine mark is found at histidine 115 and histidine 247.

It belongs to the polyphosphate kinase 2 (PPK2) family. Class I subfamily. Interacts with Ndk. In terms of processing, autophosphorylated at His-115 and His-247 using polyP as a phosphate donor.

It catalyses the reaction [phosphate](n) + GTP = [phosphate](n+1) + GDP. In terms of biological role, uses inorganic polyphosphate (polyP) as a donor to convert GDP to GTP. In addition, modulates nucleotide triphosphate synthesis catalyzed by the nucleoside diphosphate kinase (Ndk) in favor of GTP production over CTP or UTP. Plays an important role in survival of M.tuberculosis in macrophages. In Mycobacterium tuberculosis (strain ATCC 25618 / H37Rv), this protein is GDP-polyphosphate phosphotransferase.